The chain runs to 384 residues: Ribosomal RNA large subunit methyltransferase G (384 aa).

Belongs to the methyltransferase superfamily. RlmG family.

Its subcellular location is the cytoplasm. It carries out the reaction guanosine(1835) in 23S rRNA + S-adenosyl-L-methionine = N(2)-methylguanosine(1835) in 23S rRNA + S-adenosyl-L-homocysteine + H(+). In terms of biological role, specifically methylates the guanine in position 1835 (m2G1835) of 23S rRNA. In Streptomyces griseus subsp. griseus (strain JCM 4626 / CBS 651.72 / NBRC 13350 / KCC S-0626 / ISP 5235), this protein is Ribosomal RNA large subunit methyltransferase G.